The following is a 574-amino-acid chain: Serine hydroxymethyltransferase (574 aa).

180–182 lines the (6S)-5,6,7,8-tetrahydrofolate pocket; it reads GHL. N6-(pyridoxal phosphate)lysine is present on Lys288. Glu306 contacts (6S)-5,6,7,8-tetrahydrofolate.

Belongs to the SHMT family. In terms of assembly, homodimer. Pyridoxal 5'-phosphate serves as cofactor.

It is found in the cytoplasm. The enzyme catalyses (6R)-5,10-methylene-5,6,7,8-tetrahydrofolate + glycine + H2O = (6S)-5,6,7,8-tetrahydrofolate + L-serine. It functions in the pathway one-carbon metabolism; tetrahydrofolate interconversion. It participates in amino-acid biosynthesis; glycine biosynthesis; glycine from L-serine: step 1/1. In terms of biological role, catalyzes the reversible interconversion of serine and glycine with tetrahydrofolate (THF) serving as the one-carbon carrier. This reaction serves as the major source of one-carbon groups required for the biosynthesis of purines, thymidylate, methionine, and other important biomolecules. Also exhibits THF-independent aldolase activity toward beta-hydroxyamino acids, producing glycine and aldehydes, via a retro-aldol mechanism. In Treponema pallidum (strain Nichols), this protein is Serine hydroxymethyltransferase.